The following is a 426-amino-acid chain: Enolase (426 aa).

Glutamine 163 is a binding site for (2R)-2-phosphoglycerate. Glutamate 205 acts as the Proton donor in catalysis. 3 residues coordinate Mg(2+): aspartate 242, glutamate 285, and aspartate 312. 4 residues coordinate (2R)-2-phosphoglycerate: lysine 337, arginine 366, serine 367, and lysine 388. Lysine 337 functions as the Proton acceptor in the catalytic mechanism.

The protein belongs to the enolase family. The cofactor is Mg(2+).

The protein resides in the cytoplasm. The protein localises to the secreted. It is found in the cell surface. The enzyme catalyses (2R)-2-phosphoglycerate = phosphoenolpyruvate + H2O. The protein operates within carbohydrate degradation; glycolysis; pyruvate from D-glyceraldehyde 3-phosphate: step 4/5. In terms of biological role, catalyzes the reversible conversion of 2-phosphoglycerate (2-PG) into phosphoenolpyruvate (PEP). It is essential for the degradation of carbohydrates via glycolysis. The protein is Enolase of Phenylobacterium zucineum (strain HLK1).